The primary structure comprises 149 residues: NADH-quinone oxidoreductase subunit A (149 aa).

3 helical membrane passes run 16 to 36 (FGIFLIVAIGLCCLMLVGAWF), 68 to 88 (FYLVAMFFVIFDVEALYLFAW), and 98 to 118 (LGFIEAAIFILVLLAGLVYLV).

This sequence belongs to the complex I subunit 3 family. As to quaternary structure, NDH-1 is composed of 13 different subunits. Subunits NuoA, H, J, K, L, M, N constitute the membrane sector of the complex.

The protein resides in the cell inner membrane. The catalysed reaction is a quinone + NADH + 5 H(+)(in) = a quinol + NAD(+) + 4 H(+)(out). Its function is as follows. NDH-1 shuttles electrons from NADH, via FMN and iron-sulfur (Fe-S) centers, to quinones in the respiratory chain. The immediate electron acceptor for the enzyme in this species is believed to be ubiquinone. Couples the redox reaction to proton translocation (for every two electrons transferred, four hydrogen ions are translocated across the cytoplasmic membrane), and thus conserves the redox energy in a proton gradient. This chain is NADH-quinone oxidoreductase subunit A, found in Cronobacter sakazakii (strain ATCC BAA-894) (Enterobacter sakazakii).